The sequence spans 444 residues: Acyl-CoA 6-desaturase (444 aa).

At 1 to 131 the chain is on the cytoplasmic side; that stretch reads MGKGGNQGEG…DMNLFKTNHV (131 aa). Residues 18-95 form the Cytochrome b5 heme-binding domain; sequence VPTFSWEEIQ…LKPLLIGELA (78 aa). Residues 132–152 form a helical membrane-spanning segment; the sequence is FFLLLLAHIIALESIAWFTVF. At 153–157 the chain is on the lumenal side; sequence YFGNG. A helical membrane pass occupies residues 158-178; the sequence is WIPTLITAFVLATSQAQAGWL. Over 179 to 264 the chain is Cytoplasmic; that stretch reads QHDYGHLSVY…KYLPYNHQHE (86 aa). The short motif at 180 to 184 is the Histidine box-1 element; it reads HDYGH. Positions 217 to 221 match the Histidine box-2 motif; the sequence is HFQHH. The chain crosses the membrane as a helical span at residues 265–285; that stretch reads YFFLIGPPLLIPMYFQYQIIM. The Lumenal portion of the chain corresponds to 286–305; that stretch reads TMIVHKNWVDLAWAVSYYIR. A helical transmembrane segment spans residues 306 to 326; the sequence is FFITYIPFYGILGALLFLNFI. The Cytoplasmic portion of the chain corresponds to 327 to 444; that stretch reads RFLESHWFVW…KLWLDAYLHK (118 aa). Residues 382-386 carry the Histidine box-3 motif; it reads QIEHH.

This sequence belongs to the fatty acid desaturase type 1 family. As to expression, expressed in a wide array of tissues, highest expression is found in liver followed by brain, lung, heart, and retina. A lower level is found in breast tumor when compared with normal tissues; lowest levels were found in patients with poor prognostic index.

It is found in the endoplasmic reticulum membrane. The enzyme catalyses (9Z,12Z)-octadecadienoyl-CoA + 2 Fe(II)-[cytochrome b5] + O2 + 2 H(+) = (6Z,9Z,12Z)-octadecatrienoyl-CoA + 2 Fe(III)-[cytochrome b5] + 2 H2O. The catalysed reaction is (9Z,12Z,15Z)-octadecatrienoyl-CoA + 2 Fe(II)-[cytochrome b5] + O2 + 2 H(+) = (6Z,9Z,12Z,15Z)-octadecatetraenoyl-CoA + 2 Fe(III)-[cytochrome b5] + 2 H2O. It carries out the reaction hexadecanoyl-CoA + 2 Fe(II)-[cytochrome b5] + O2 + 2 H(+) = (6Z)-hexadecenoyl-CoA + 2 Fe(III)-[cytochrome b5] + 2 H2O. It catalyses the reaction (9Z,12Z,15Z,18Z,21Z)-tetracosapentaenoyl-CoA + 2 Fe(II)-[cytochrome b5] + O2 + 2 H(+) = (6Z,9Z,12Z,15Z,18Z,21Z)-tetracosahexaenoyl-CoA + 2 Fe(III)-[cytochrome b5] + 2 H2O. The enzyme catalyses (11E)-octadecenoyl-CoA + 2 Fe(II)-[cytochrome b5] + O2 + 2 H(+) = (6Z,11E)-octadecadienoyl-CoA + 2 Fe(III)-[cytochrome b5] + 2 H2O. The catalysed reaction is (11Z,14Z)-eicosadienoyl-CoA + 2 Fe(II)-[cytochrome b5] + O2 + 2 H(+) = (8Z,11Z,14Z)-eicosatrienoyl-CoA + 2 Fe(III)-[cytochrome b5] + 2 H2O. It carries out the reaction (11Z,14Z,17Z)-eicosatrienoyl-CoA + 2 Fe(II)-[cytochrome b5] + O2 + 2 H(+) = (8Z,11Z,14Z,17Z)-eicosatetraenoyl-CoA + 2 Fe(III)-[cytochrome b5] + 2 H2O. Its pathway is lipid metabolism; polyunsaturated fatty acid biosynthesis. Functionally, involved in the biosynthesis of highly unsaturated fatty acids (HUFA) from the essential polyunsaturated fatty acids (PUFA) linoleic acid (LA) (18:2n-6) and alpha-linolenic acid (ALA) (18:3n-3) precursors, acting as a fatty acyl-coenzyme A (CoA) desaturase that introduces a cis double bond at carbon 6 of the fatty acyl chain. Catalyzes the first and rate limiting step in this pathway which is the desaturation of LA (18:2n-6) and ALA (18:3n-3) into gamma-linoleate (GLA) (18:3n-6) and stearidonate (18:4n-3), respectively. Subsequently, in the biosynthetic pathway of HUFA n-3 series, it desaturates tetracosapentaenoate (24:5n-3) to tetracosahexaenoate (24:6n-3), which is then converted to docosahexaenoate (DHA)(22:6n-3), an important lipid for nervous system function. Desaturates hexadecanate (palmitate) to produce 6Z-hexadecenoate (sapienate), a fatty acid unique to humans and major component of human sebum, that has been implicated in the development of acne and may have potent antibacterial activity. It can also desaturate (11E)-octadecenoate (trans-vaccenoate, the predominant trans fatty acid in human milk) at carbon 6 generating (6Z,11E)-octadecadienoate. In addition to Delta-6 activity, this enzyme exhibits Delta-8 activity with slight biases toward n-3 fatty acyl-CoA substrates. This is Acyl-CoA 6-desaturase from Homo sapiens (Human).